Reading from the N-terminus, the 642-residue chain is Triacylglycerol lipase 3 (642 aa).

The region spanning 204-392 (LILQGGSLFG…NEIEPFLNIN (189 aa)) is the PNPLA domain. The GXSXG signature appears at 235 to 239 (GSSMG). Catalysis depends on S237, which acts as the Nucleophile. An HXXXXD acyltransferase motif motif is present at residues 298 to 303 (HGYSQD). Residue E403 is the Proton acceptor of the active site. Positions 471–481 (RKTQRSSSQSP) are enriched in polar residues. Residues 471 to 502 (RKTQRSSSQSPIKAGTVEDLEPEPLMSPVPPS) form a disordered region.

The protein resides in the lipid droplet. It carries out the reaction a triacylglycerol + H2O = a diacylglycerol + a fatty acid + H(+). The enzyme catalyses 1,2,3-tri-(9Z-octadecenoyl)-glycerol + H2O = di-(9Z)-octadecenoylglycerol + (9Z)-octadecenoate + H(+). The catalysed reaction is di-(9Z)-octadecenoylglycerol + H2O = (9Z-octadecenoyl)-glycerol + (9Z)-octadecenoate + H(+). It catalyses the reaction a 1-acyl-sn-glycero-3-phosphoethanolamine + (9Z)-octadecenoyl-CoA = 1-acyl-2-(9Z)-octadecenoyl-sn-glycero-3-phosphoethanolamine + CoA. It carries out the reaction a 1-acyl-sn-glycero-3-phosphoethanolamine + hexadecanoyl-CoA = 1-acyl-2-hexadecanoyl-sn-glycero-3-phosphoethanolamine + CoA. Its activity is regulated as follows. Loses its lipolytic activity in cells lacking nonpolar lipids. Functionally, lipid particle-localized triacylglycerol (TAG) lipase. The lipid droplet/particle is a lipid storage compartment which serves as a depot of energy and building blocks for membrane lipid biosynthesis. Involved in the mobilization of the non-polar storage lipids triacylglycerols (TAGs) from lipid particles by hydrolysis of TAGs, releasing and supplying specific fatty acids to the appropriate metabolic pathways. Also catalyzes the acylation of lysophosphatidic acid (LPA). Important for efficient sporulation, but rather through its acyltransferase than lipase activity. This chain is Triacylglycerol lipase 3 (TGL3), found in Saccharomyces cerevisiae (strain ATCC 204508 / S288c) (Baker's yeast).